The following is a 44-amino-acid chain: Photosystem I reaction center subunit IX (44 aa).

A helical transmembrane segment spans residues Y7 to I27.

It belongs to the PsaJ family.

The protein localises to the plastid. It localises to the chloroplast thylakoid membrane. May help in the organization of the PsaE and PsaF subunits. This is Photosystem I reaction center subunit IX from Lotus japonicus (Lotus corniculatus var. japonicus).